A 238-amino-acid polypeptide reads, in one-letter code: Probable transcriptional regulatory protein YcdB (238 aa).

It belongs to the TACO1 family. YeeN subfamily.

Its subcellular location is the cytoplasm. In Lactococcus lactis subsp. lactis (strain IL1403) (Streptococcus lactis), this protein is Probable transcriptional regulatory protein YcdB (ycdB).